The chain runs to 229 residues: 2-C-methyl-D-erythritol 4-phosphate cytidylyltransferase (229 aa).

The protein belongs to the IspD/TarI cytidylyltransferase family. IspD subfamily.

It catalyses the reaction 2-C-methyl-D-erythritol 4-phosphate + CTP + H(+) = 4-CDP-2-C-methyl-D-erythritol + diphosphate. It functions in the pathway isoprenoid biosynthesis; isopentenyl diphosphate biosynthesis via DXP pathway; isopentenyl diphosphate from 1-deoxy-D-xylulose 5-phosphate: step 2/6. Its function is as follows. Catalyzes the formation of 4-diphosphocytidyl-2-C-methyl-D-erythritol from CTP and 2-C-methyl-D-erythritol 4-phosphate (MEP). The chain is 2-C-methyl-D-erythritol 4-phosphate cytidylyltransferase from Neisseria gonorrhoeae (strain NCCP11945).